The sequence spans 391 residues: Multidrug resistance protein MdtL (391 aa).

A run of 12 helical transmembrane segments spans residues 4–24, 42–62, 69–89, 93–113, 131–151, 158–178, 203–222, 245–265, 269–289, 293–313, 331–351, and 356–376; these read FLIC…MYLV, IAFS…GKVA, PVAI…SLAE, LFLA…VVAF, LLNG…HLIM, SLFW…LFIL, FFLS…LTFV, ALTA…LGIF, TLMI…AVSP, VSLF…GVAM, LGIA…VVGI, and MLIG…MFVA.

It belongs to the major facilitator superfamily. DHA1 family. MdtL (TC 2.A.1.2.22) subfamily.

The protein localises to the cell inner membrane. Its function is as follows. Confers resistance to chloramphenicol. In Escherichia coli (strain SMS-3-5 / SECEC), this protein is Multidrug resistance protein MdtL.